A 452-amino-acid chain; its full sequence is Maltoporin (452 aa).

The signal sequence occupies residues 1 to 25 (MMITLRKLPLAVAVAAGVMSAQAMA).

This sequence belongs to the porin LamB (TC 1.B.3) family. As to quaternary structure, homotrimer formed of three 18-stranded antiparallel beta-barrels, containing three independent channels.

The protein resides in the cell outer membrane. The catalysed reaction is beta-maltose(in) = beta-maltose(out). Involved in the transport of maltose and maltodextrins. The chain is Maltoporin from Salmonella heidelberg (strain SL476).